The sequence spans 432 residues: Elongation factor 1-gamma (432 aa).

One can recognise a GST N-terminal domain in the interval 1 to 82; sequence LYTYPENWRA…YVSNEELRGS (82 aa). In terms of domain architecture, GST C-terminal spans 83 to 211; it reads TPEAAAQVVQ…VKLCEKMAQF (129 aa). Residues lysine 142 and lysine 207 each carry the N6-acetyllysine modification. A compositionally biased stretch (basic and acidic residues) spans 216–249; that stretch reads FAESQPKKDTPRKEKGSREEKQKPQAERKEEKKA. The segment at 216 to 258 is disordered; sequence FAESQPKKDTPRKEKGSREEKQKPQAERKEEKKAAAPAPEEEL. Lysine 248 participates in a covalent cross-link: Glycyl lysine isopeptide (Lys-Gly) (interchain with G-Cter in SUMO1). Residues 271 to 432 enclose the EF-1-gamma C-terminal domain; sequence AKDPFAHLPK…KAFNQGKIFK (162 aa). Lysine 280 is covalently cross-linked (Glycyl lysine isopeptide (Lys-Gly) (interchain with G-Cter in SUMO2)). Lysine 396 bears the N6-acetyllysine mark. Lysine 429 is subject to N6-acetyllysine; alternate. Lysine 429 is subject to N6-malonyllysine; alternate.

EF-1 is composed of four subunits: alpha, beta, delta, and gamma.

Functionally, probably plays a role in anchoring the complex to other cellular components. This is Elongation factor 1-gamma (EEF1G) from Sus scrofa (Pig).